The primary structure comprises 994 residues: MSQFTSSYDPTSFEARLYAEWEAAGHFKPSGVGQPYTILLPPPNVTGTLHMGHAFQQTLMDALVRYHRMCGDDTLWQVGTDHAGIATEMVVSRNMALEGRGETRDSLGREGFINKVWEWKQQSGDTIERQMRRLGVSADWSRSTFTMDAQPSAAVTEAFVRWYEEGLIYRGQRLVNWDPVLKTAISDLEVENVQEEGMLWSIRYPLSDGVTYEHIEHDAAGNETLRETRDSLIVATTRPETLLGDTAVMVHPEDRRYTALIGKTVTLPLTGRQIEVISDTYVEPTFGTGVVKVTPAHDFNDYQVGLRHRLPMIQVLDDAACIVSKTSIQSGIASGATSDTTDTPSDSDASNASNQHDTLIMPAHLAGLDRYEARKQILADLDAQGLLVAATPHTLQVPRGDRTGQVIEPYLTAQWFVRMETLAARGLELVERGAVRFVPPNWINTYRHWMENIQDWCISRQLWWGHRIPAWFDTQGCVYVGRSEAEVRAKHALGPEVTLTQDNDVLETWFSSQLWPFSTLGWPDPMAMAERGFERYLPSSVLVTGFDIIFFWVARMIMATDHFTGNVPFHDVYITGLIRDAQGQKMSKSKGNVLDPLDIIDGITLDDLVAKRTTGLMQPKLAEKIAKATRKEFPDGIAPHGADALRFTIAALATHGRDIKFDLGRAEGYKNFCNKLWNATRFVLMNTAGDTAHSPAQHQAGQDGQDVPRTPQPRTDAEQWILSRLAAVTAEAHAQFAAYRFDLLAQALYEFAWNEFCDWFVELAKPALNGDDTQAAASTRHTLLYVLETLLRLLHPLIPFITEELWCQVAPRLGIQATTLMLRPYPQPQQLETTAFANAAADVEWLKIMVSALRRIRSTLNVPPSRRISLLLQGGQEVDRRRITHFAIALHFLLKLEHIDWLSATTAAPPSATAIVGSLKLLVPLEGLIDVDAERARLDKEIKRVESEIDKSNGKLSNAVFVQNAPTAVVEQERSRLREWTTQLNGLRERRTTL.

Residues 43-53 carry the 'HIGH' region motif; it reads PNVTGTLHMGH. A disordered region spans residues 332–356; sequence IASGATSDTTDTPSDSDASNASNQH. The span at 333-353 shows a compositional bias: low complexity; the sequence is ASGATSDTTDTPSDSDASNAS. A 'KMSKS' region motif is present at residues 585 to 589; that stretch reads KMSKS. K588 lines the ATP pocket. A disordered region spans residues 691–713; the sequence is TAHSPAQHQAGQDGQDVPRTPQP. Residues 928-994 are a coiled coil; that stretch reads LIDVDAERAR…NGLRERRTTL (67 aa).

The protein belongs to the class-I aminoacyl-tRNA synthetase family. ValS type 1 subfamily. As to quaternary structure, monomer.

It localises to the cytoplasm. The catalysed reaction is tRNA(Val) + L-valine + ATP = L-valyl-tRNA(Val) + AMP + diphosphate. Its function is as follows. Catalyzes the attachment of valine to tRNA(Val). As ValRS can inadvertently accommodate and process structurally similar amino acids such as threonine, to avoid such errors, it has a 'posttransfer' editing activity that hydrolyzes mischarged Thr-tRNA(Val) in a tRNA-dependent manner. The chain is Valine--tRNA ligase from Xylella fastidiosa (strain M23).